Here is a 449-residue protein sequence, read N- to C-terminus: Lipase (449 aa).

Residues 1–23 (MGVFDYKNLGTEASKTLFADATA) form the signal peptide. The disordered stretch occupies residues 58–77 (RQHRLPGSDPPAFPGILTRK). The active-site Charge relay system is Ser-206. The Ca(2+) site is built by Gly-318, Asp-387, and Asp-396. 2 Hemolysin-type calcium-binding repeats span residues 372–389 (IGSDGNDLIQGGKGADFI) and 390–407 (EGGKGNDTIRDNSGHNTF).

The protein belongs to the AB hydrolase superfamily. Lipase family.

It catalyses the reaction a triacylglycerol + H2O = a diacylglycerol + a fatty acid + H(+). This is Lipase from Pseudomonas fluorescens.